Consider the following 401-residue polypeptide: Inactive (1R,4R,5S)-(-)-guaia-6,10(14)-diene synthase (401 aa).

The segment at 1 to 20 (MVKFDSGSESEMTNGDELHI) is disordered. Mg(2+) is bound by residues D134 and E139. The short motif at 134 to 138 (DDQFD) is the DDXXD motif element. R242 is a substrate binding site. S292 provides a ligand contact to Mg(2+). Residue K295 participates in substrate binding. D296 serves as a coordination point for Mg(2+). 375 to 376 (RY) is a substrate binding site.

Belongs to the terpene synthase family. Mg(2+) serves as cofactor.

This Gibberella fujikuroi (strain CBS 195.34 / IMI 58289 / NRRL A-6831) (Bakanae and foot rot disease fungus) protein is Inactive (1R,4R,5S)-(-)-guaia-6,10(14)-diene synthase.